The sequence spans 297 residues: ClpXP adapter protein SpxH (297 aa).

This sequence belongs to the SpxH family. As to quaternary structure, interacts with Spx.

It localises to the cytoplasm. Its function is as follows. Adapter protein required for efficient degradation of Spx by ClpXP under non-stress conditions. Interaction with Spx stabilizes Spx and exposes the C-terminus of Spx for recognition and proteolysis by ClpXP. The chain is ClpXP adapter protein SpxH from Bacillus cereus (strain ZK / E33L).